The sequence spans 187 residues: MADTSDFKNGLVLKIDGQLQQIVEFQHVKPGKGPAFVRTKLKNVVSGKIVDKTFNAGVKVETATVDRRDMTYLYHDGSDYVFMDGETFDQISISEATIGSSARFLLENMAVQVAMHEGAPLYVELPVSVELEVTHTDIGLQGDRSTGGTKPATLETGAEVQVPLFINTGDKLRIDSRDGSYLGRVNA.

It belongs to the elongation factor P family.

The protein localises to the cytoplasm. It participates in protein biosynthesis; polypeptide chain elongation. Functionally, involved in peptide bond synthesis. Stimulates efficient translation and peptide-bond synthesis on native or reconstituted 70S ribosomes in vitro. Probably functions indirectly by altering the affinity of the ribosome for aminoacyl-tRNA, thus increasing their reactivity as acceptors for peptidyl transferase. The chain is Elongation factor P from Nocardia farcinica (strain IFM 10152).